We begin with the raw amino-acid sequence, 378 residues long: MQTPKLIRPTLLSMAILSSMAWATGASAALVPPKGYDAPIEKMKTGDHNFSCEAIPKPYTDKLVFRSKYEGSDKARATLNAVSEEAFRDATKDITTLERGVSKVVMQYMRDGRPEQLDCALNMMTTWAKADALESREFNHTGKSMRKWALGSMSSAYLRLKFSESHPLANRQQDAKIIETWFSKLADQVVSDWSNLPLEKINNHSYWAAWSVMATAVATNRQDLFDWAVKEYKVAANQVDKDGFLPNEMKRRQRALSYHNYALPPLAMIASFAQANGVDLRPENNGALKRLGDRVLAGVKDPSIFAEHNGEKQDMTDLKKDPKFAWLEPYCSLYTCSPDVLEEKHEKQPFKTFRLGGDLTKVYDPTHEKGDKGDNDGS.

The first 28 residues, 1 to 28, serve as a signal peptide directing secretion; sequence MQTPKLIRPTLLSMAILSSMAWATGASA. Residues 67 to 68, 140 to 141, and Tyr258 contribute to the substrate site; these read SK and HT.

Belongs to the polysaccharide lyase 5 family.

It localises to the periplasm. It carries out the reaction Eliminative cleavage of alginate to give oligosaccharides with 4-deoxy-alpha-L-erythro-hex-4-enuronosyl groups at their non-reducing ends and beta-D-mannuronate at their reducing end.. Its activity is regulated as follows. The monovalent cation sodium enhances activity but is not absolutely required. Its function is as follows. Catalyzes the depolymerization of alginate by cleaving the beta-1,4 glycosidic bond between two adjacent sugar residues via a beta-elimination mechanism. Degrades deacetylated polymannuronate (polyM) alginate from P.aeruginosa more efficiently than non-deacetylated polyM and alginate from M.pyrifera. AlgL from P.syringae also degrades its own alginate, which may indicate a role in cleaving preformed alginate and/or in determining the length of the alginate polymer. May serve to degrade mislocalized alginate that is trapped in the periplasmic space. The chain is Alginate lyase from Pseudomonas syringae pv. syringae.